Consider the following 407-residue polypeptide: Tyrosine--tRNA ligase (407 aa).

The 'HIGH' region motif lies at 47–56 (PTAPDLHLGA). The 'KMSKS' region motif lies at 231–235 (KMSKS). Position 234 (Lys234) interacts with ATP. The 62-residue stretch at 342-403 (PRLSQLLVQV…GKRHFARVAL (62 aa)) folds into the S4 RNA-binding domain.

The protein belongs to the class-I aminoacyl-tRNA synthetase family. TyrS type 2 subfamily. In terms of assembly, homodimer.

It localises to the cytoplasm. It carries out the reaction tRNA(Tyr) + L-tyrosine + ATP = L-tyrosyl-tRNA(Tyr) + AMP + diphosphate + H(+). In terms of biological role, catalyzes the attachment of tyrosine to tRNA(Tyr) in a two-step reaction: tyrosine is first activated by ATP to form Tyr-AMP and then transferred to the acceptor end of tRNA(Tyr). The protein is Tyrosine--tRNA ligase of Acidithiobacillus ferrooxidans (Thiobacillus ferrooxidans).